Consider the following 433-residue polypeptide: MRMIDIIEKKRDGHTLTTEEINFFIDGYVKGDIPDYQASSLAMAIYFQDMNDDERAALTMAMVNSGDMIDLSDIKGVKVDKHSTGGVGDTTTLVLAPLVAAVDVPVAKMSGRGLGHTGGTIDKLEAIDGFHVEIDEATFVKLVNENKVAVVGQSGNLTPADKKLYALRDVTGTVNSIPLIASSIMSKKIAAGADAIVLDVKTGSGAFMKTLEDAEALAHAMVRIGNNVGRNTMAIISDMNQPLGRAIGNALELQEAIDTLKGQGPKDLTELVLTLGSQMVVLANKAETLEEARALLIEAINSGAALEKFKTFIKNQGGDETVIDHPERLPQAQYQIEYKAKKSGYVTELVSNDIGVASMMLGAGRLTKEDDIDLAVGIVLNKKIGDKVEEGESLLTIHSNRQDVDDVVKKLDSSITIADHVVSPTLIHKIITE.

81-83 serves as a coordination point for phosphate; that stretch reads KHS. The K(+) site is built by Gly88 and Thr90. Residues Thr92, 108–110, and Thr120 each bind phosphate; that span reads KMS. Positions 168 and 187 each coordinate substrate. Residues Leu243, Ala246, and Glu255 each coordinate K(+).

The protein belongs to the thymidine/pyrimidine-nucleoside phosphorylase family. In terms of assembly, homodimer. K(+) serves as cofactor.

It catalyses the reaction uridine + phosphate = alpha-D-ribose 1-phosphate + uracil. The catalysed reaction is thymidine + phosphate = 2-deoxy-alpha-D-ribose 1-phosphate + thymine. It carries out the reaction 2'-deoxyuridine + phosphate = 2-deoxy-alpha-D-ribose 1-phosphate + uracil. Its function is as follows. Catalyzes phosphorolysis of the pyrimidine nucleosides uridine, thymidine and 2'-deoxyuridine with the formation of the corresponding pyrimidine base and ribose-1-phosphate. This chain is Pyrimidine-nucleoside phosphorylase (pdp), found in Staphylococcus aureus (strain Mu50 / ATCC 700699).